Reading from the N-terminus, the 953-residue chain is Communesin biosynthesis cluster-specific transcription factor cnsN (953 aa).

Residues 371-418 (ELESTSPRTSHSSLSQDDTASLHSRSSLSSSPGRFPPSQKLVATSDSP) form a disordered region. The segment covering 374–408 (STSPRTSHSSLSQDDTASLHSRSSLSSSPGRFPPS) has biased composition (low complexity).

It is found in the nucleus. In terms of biological role, transcriptional regulator; part of the gene cluster that mediates the biosynthesis of communesins, a prominent class of indole alkaloids with great potential as pharmaceuticals. This Penicillium expansum (Blue mold rot fungus) protein is Communesin biosynthesis cluster-specific transcription factor cnsN.